A 272-amino-acid polypeptide reads, in one-letter code: Methylsterol monooxygenase 2-1 (272 aa).

The next 3 helical transmembrane spans lie at 24–44, 72–94, and 107–127; these read IGSF…YIFL, LLLY…FRFM, and VVSA…YWGH. Residues 113-259 form the Fatty acid hydroxylase domain; it reads LFYFIIEDFV…FVYMDWIFGT (147 aa). Positions 127–131 match the Histidine box-1 motif; it reads HRILH. A Histidine box-2 motif is present at residues 140 to 144; sequence HSVHH. Transmembrane regions (helical) follow at residues 162–182 and 209–229; these read ILFL…HLIT and NFLP…AYSA. The Histidine box-3 signature appears at 231–237; that stretch reads FHDYHHR.

Belongs to the sterol desaturase family. Fe cation is required as a cofactor. In terms of tissue distribution, strongly expressed in leaves, flowers, siliques and developing seeds.

Its subcellular location is the endoplasmic reticulum membrane. The catalysed reaction is 4,4-dimethyl-5alpha-cholest-7-en-3beta-ol + 6 Fe(II)-[cytochrome b5] + 3 O2 + 5 H(+) = 4alpha-carboxy-4beta-methyl-5alpha-cholest-7-ene-3beta-ol + 6 Fe(III)-[cytochrome b5] + 4 H2O. It carries out the reaction 24-methylidenelophenol + 6 Fe(II)-[cytochrome b5] + 3 O2 + 5 H(+) = 4alpha-carboxy-ergosta-7,24(24(1))-dien-3beta-ol + 6 Fe(III)-[cytochrome b5] + 4 H2O. In terms of biological role, non-heme iron oxygenase involved in sterols biosynthesis by catalyzing the removal of the second methyl group at the C-4 position. 24-ethylidenelophenol and 24-ethyllophenol are the preferred substrates. Together with SMO2-2, required during embryogenesis, probably by maintaining sterols and auxin homeostasis. The chain is Methylsterol monooxygenase 2-1 from Arabidopsis thaliana (Mouse-ear cress).